Consider the following 223-residue polypeptide: Glutathione S-transferase U6 (223 aa).

The GST N-terminal domain maps to 5 to 84 (EEVKLLGIWA…YIDETWKHNP (80 aa)). Residues 15-16 (SP), 41-42 (NK), 55-56 (KI), and 68-69 (ES) each bind glutathione. Residues 89–216 (DPFQRSKARV…EKHIEHMNNM (128 aa)) enclose the GST C-terminal domain. A Phosphothreonine modification is found at T150.

This sequence belongs to the GST superfamily. Tau family.

The protein resides in the cytoplasm. It is found in the cytosol. The enzyme catalyses RX + glutathione = an S-substituted glutathione + a halide anion + H(+). May be involved in the conjugation of reduced glutathione to a wide number of exogenous and endogenous hydrophobic electrophiles and have a detoxification role against certain herbicides. The polypeptide is Glutathione S-transferase U6 (GSTU6) (Arabidopsis thaliana (Mouse-ear cress)).